A 267-amino-acid chain; its full sequence is Trehalose-phosphate phosphatase (267 aa).

Catalysis depends on aspartate 20, which acts as the Nucleophile. Mg(2+) contacts are provided by aspartate 20, aspartate 22, and aspartate 198. 20 to 22 (DLD) is a binding site for substrate.

Belongs to the trehalose phosphatase family. It depends on Mg(2+) as a cofactor.

The enzyme catalyses alpha,alpha-trehalose 6-phosphate + H2O = alpha,alpha-trehalose + phosphate. It functions in the pathway glycan biosynthesis; trehalose biosynthesis. Removes the phosphate from trehalose 6-phosphate to produce free trehalose. This chain is Trehalose-phosphate phosphatase (otsB), found in Salmonella typhimurium (strain LT2 / SGSC1412 / ATCC 700720).